The following is a 108-amino-acid chain: Nucleoid-associated protein Bphy_0952 (108 aa).

Residues 87–108 are disordered; it reads AQEKMGGMTSGLPLPPGFKLPF. Over residues 99–108 the composition is skewed to pro residues; that stretch reads PLPPGFKLPF.

It belongs to the YbaB/EbfC family. In terms of assembly, homodimer.

Its subcellular location is the cytoplasm. The protein localises to the nucleoid. Functionally, binds to DNA and alters its conformation. May be involved in regulation of gene expression, nucleoid organization and DNA protection. The sequence is that of Nucleoid-associated protein Bphy_0952 from Paraburkholderia phymatum (strain DSM 17167 / CIP 108236 / LMG 21445 / STM815) (Burkholderia phymatum).